Here is a 455-residue protein sequence, read N- to C-terminus: Ribosomal protein uS12 methylthiotransferase RimO (455 aa).

The MTTase N-terminal domain maps to 10-120 (PKVGMVSLGC…VVEAVHDAAP (111 aa)). The [4Fe-4S] cluster site is built by C19, C55, C84, C151, C155, and C158. Residues 137 to 380 (LTPRHYSYLK…MAKTAAISAA (244 aa)) form the Radical SAM core domain. In terms of domain architecture, TRAM spans 383–455 (EAKIGRTLPV…DEHDLFGVVT (73 aa)).

This sequence belongs to the methylthiotransferase family. RimO subfamily. [4Fe-4S] cluster is required as a cofactor.

It localises to the cytoplasm. The enzyme catalyses L-aspartate(89)-[ribosomal protein uS12]-hydrogen + (sulfur carrier)-SH + AH2 + 2 S-adenosyl-L-methionine = 3-methylsulfanyl-L-aspartate(89)-[ribosomal protein uS12]-hydrogen + (sulfur carrier)-H + 5'-deoxyadenosine + L-methionine + A + S-adenosyl-L-homocysteine + 2 H(+). In terms of biological role, catalyzes the methylthiolation of an aspartic acid residue of ribosomal protein uS12. The polypeptide is Ribosomal protein uS12 methylthiotransferase RimO (Sphingopyxis alaskensis (strain DSM 13593 / LMG 18877 / RB2256) (Sphingomonas alaskensis)).